We begin with the raw amino-acid sequence, 490 residues long: MTYKKSLGNVSTKYYKMKEDLQLDTGNILETPTIAYETYGKLNNEKSNVILVCHALTGDAHAAGWHDGDKKPGWWNIIIGPGKPLDTNRYFIICSNVLGSCKGTTGPCDINPKTNKPYGLDFPIITINDMVKAQKKLLDYLDINHLYAVVGGSMGGMQVLQWTITYPDMVRNAIMIASGAYSTPQQIAFNAVQRRSIIEDPNWKGGKYYEEGVSPEQGLSVARMIAHITYLSNESMYEKFGRKLQDKNKFSYDFSTEFQVESYLEHQGSTFTKKFDANSYLYLTKALDYFEVRKNTSLEEALKPVKSRILIMSITSDWLYTHEHMEEIVMALRANNVEVSYSRLNSEYGHDAFLIENGQMNYIISNFLSKARVKDVMSHTTLTLDYTADIKEAAELMMNCNKTHIPIVDDGKEIVGIITAWDLSKAIATDANSIDDIMTKNVLTCTEYDSLHKVIRKMKEHNISGLPVIDKNHKVIGSITTAHISNLYEK.

The region spanning 48–354 (NVILVCHALT…NSEYGHDAFL (307 aa)) is the AB hydrolase-1 domain. S153 acts as the Nucleophile in catalysis. R223 lines the substrate pocket. Catalysis depends on residues D317 and H350. D351 contributes to the substrate binding site. 2 consecutive CBS domains span residues 377 to 434 (MSHT…ANSI) and 438 to 490 (MTKN…LYEK).

The protein belongs to the AB hydrolase superfamily. MetX family. Homodimer.

The protein resides in the cytoplasm. It carries out the reaction L-homoserine + acetyl-CoA = O-acetyl-L-homoserine + CoA. Its pathway is amino-acid biosynthesis; L-methionine biosynthesis via de novo pathway; O-acetyl-L-homoserine from L-homoserine: step 1/1. Transfers an acetyl group from acetyl-CoA to L-homoserine, forming acetyl-L-homoserine. This Methanosphaera stadtmanae (strain ATCC 43021 / DSM 3091 / JCM 11832 / MCB-3) protein is Homoserine O-acetyltransferase.